The following is a 461-amino-acid chain: Bifunctional protein GlmU (461 aa).

The segment at 1-230 (MSKIHAVVLA…PEETLGVNDR (230 aa)) is pyrophosphorylase. Residues 9–12 (LAAG), Lys-23, Gln-73, 78–79 (GT), 101–103 (YGD), Gly-140, Glu-155, Asn-170, and Asn-228 contribute to the UDP-N-acetyl-alpha-D-glucosamine site. Asp-103 contacts Mg(2+). Position 228 (Asn-228) interacts with Mg(2+). The segment at 231–251 (VQLSEAEAYMKKRIMTGHMRN) is linker. The N-acetyltransferase stretch occupies residues 252–461 (GVTIIDPTST…KMPRKGKKQS (210 aa)). The UDP-N-acetyl-alpha-D-glucosamine site is built by Arg-333 and Lys-351. The Proton acceptor role is filled by His-363. Tyr-366 and Asn-377 together coordinate UDP-N-acetyl-alpha-D-glucosamine. Residues 386–387 (NY), Ala-423, and Arg-440 each bind acetyl-CoA.

It in the N-terminal section; belongs to the N-acetylglucosamine-1-phosphate uridyltransferase family. The protein in the C-terminal section; belongs to the transferase hexapeptide repeat family. Homotrimer. The cofactor is Mg(2+).

The protein resides in the cytoplasm. It carries out the reaction alpha-D-glucosamine 1-phosphate + acetyl-CoA = N-acetyl-alpha-D-glucosamine 1-phosphate + CoA + H(+). It catalyses the reaction N-acetyl-alpha-D-glucosamine 1-phosphate + UTP + H(+) = UDP-N-acetyl-alpha-D-glucosamine + diphosphate. The protein operates within nucleotide-sugar biosynthesis; UDP-N-acetyl-alpha-D-glucosamine biosynthesis; N-acetyl-alpha-D-glucosamine 1-phosphate from alpha-D-glucosamine 6-phosphate (route II): step 2/2. Its pathway is nucleotide-sugar biosynthesis; UDP-N-acetyl-alpha-D-glucosamine biosynthesis; UDP-N-acetyl-alpha-D-glucosamine from N-acetyl-alpha-D-glucosamine 1-phosphate: step 1/1. It participates in bacterial outer membrane biogenesis; LPS lipid A biosynthesis. Its function is as follows. Catalyzes the last two sequential reactions in the de novo biosynthetic pathway for UDP-N-acetylglucosamine (UDP-GlcNAc). The C-terminal domain catalyzes the transfer of acetyl group from acetyl coenzyme A to glucosamine-1-phosphate (GlcN-1-P) to produce N-acetylglucosamine-1-phosphate (GlcNAc-1-P), which is converted into UDP-GlcNAc by the transfer of uridine 5-monophosphate (from uridine 5-triphosphate), a reaction catalyzed by the N-terminal domain. The sequence is that of Bifunctional protein GlmU from Brevibacillus brevis (strain 47 / JCM 6285 / NBRC 100599).